The primary structure comprises 769 residues: Serine protease HtrA-like (769 aa).

Basic residues predominate over residues 1-20; the sequence is MDIGKKHVIPKSQYRRKRRE. Positions 1–390 are disordered; the sequence is MDIGKKHVIP…ATSKLNKGRA (390 aa). 2 stretches are compositionally biased toward basic and acidic residues: residues 21 to 64 and 71 to 108; these read FFHN…ERFK and LEQRNRDVNENKAEESKSNQDSKSAYNRDHYLTDDVSK. Polar residues predominate over residues 126–137; it reads YEQNSEATLSTK. The span at 138–186 shows a compositional bias: basic and acidic residues; sequence STDKVESTEMRKLSSDKNKVGHEEQHVLSKPSEHDKETRIDSESSRTDS. The span at 247–262 shows a compositional bias: polar residues; that stretch reads QQSQNEQTKTYTYGDS. Composition is skewed to basic and acidic residues over residues 264 to 296 and 310 to 330; these read QNDKSNHENDLSHHIPSISDDKDNVMRENHIVD and KTDDDRKLDEKIHVEDKHKQN. A compositionally biased stretch (polar residues) spans 331–347; sequence ADSSETVGYQSQSTASH. The span at 348–364 shows a compositional bias: basic and acidic residues; the sequence is RSTEKRNISINDHDKLN. Residues 365 to 390 show a composition bias toward polar residues; the sequence is GQKTNTKTSANNNQKKATSKLNKGRA. Residues 410–430 form a helical membrane-spanning segment; sequence LVILMGIIILIVILNAIFNNV. Active-site charge relay system residues include histidine 504, aspartate 534, and serine 619. Residues 680–733 enclose the PDZ domain; it reads IASLNSFERQAVKLPGKVKNGVVVDQVDNNGLADQSGLKKGDVITELDGKLLED.

It belongs to the peptidase S1C family.

The protein resides in the cell membrane. The sequence is that of Serine protease HtrA-like from Staphylococcus aureus (strain COL).